A 144-amino-acid chain; its full sequence is MRLNTLSPAAGAKHAPKRVGRGMGSGLGKTAGRGHKGQKSRSGGGVRPGFEGGQMPLKIRLPKFGFTSRRAMVTAEVRVLELAKVNGDVIDLNALKDANVITRNIQFAKIVLSGTIERPVTVKGLKVTKGARAAIEAAGGKIEE.

A disordered region spans residues 1–54 (MRLNTLSPAAGAKHAPKRVGRGMGSGLGKTAGRGHKGQKSRSGGGVRPGFEGGQ). Composition is skewed to gly residues over residues 21 to 31 (RGMGSGLGKTA) and 42 to 52 (SGGGVRPGFEG).

The protein belongs to the universal ribosomal protein uL15 family. Part of the 50S ribosomal subunit.

Binds to the 23S rRNA. The chain is Large ribosomal subunit protein uL15 from Shewanella oneidensis (strain ATCC 700550 / JCM 31522 / CIP 106686 / LMG 19005 / NCIMB 14063 / MR-1).